The sequence spans 857 residues: Protein sip-5 (857 aa).

6 disordered regions span residues 1–81 (MGNA…ARRL), 157–231 (GLPI…FKPT), 384–416 (SESS…APNV), 466–517 (FGRR…GNRR), 545–747 (KAEK…PMFN), and 763–857 (HAGK…QVTL). 2 stretches are compositionally biased toward basic and acidic residues: residues 7–16 (KESRGDDSGR) and 36–48 (ESSR…RHDL). Low complexity predominate over residues 49-61 (TGLLGRAAGGSSS). Over residues 62–81 (HADERHERKETKQEREARRL) the composition is skewed to basic and acidic residues. Polar residues-rich tracts occupy residues 179-191 (ASPT…TNHL) and 199-208 (SLSTASEHST). 3 stretches are compositionally biased toward low complexity: residues 209–230 (SNAG…PFKP), 384–394 (SESSVNSGSLS), and 476–504 (SASA…TANT). Over residues 545–572 (KAEKEEQKEAKKREKEREKAEKKAEKAA) the composition is skewed to basic and acidic residues. 2 stretches are compositionally biased toward low complexity: residues 586-604 (SRSG…PGLS) and 621-645 (ASVA…ALAP). The span at 648-657 (STKDKGKAVD) shows a compositional bias: basic and acidic residues. Residues 688 to 697 (SSASSASSSA) show a composition bias toward low complexity. Residues 698 to 712 (VESNQGSYVPPSNLQ) are compositionally biased toward polar residues. The span at 783-799 (ETAKSGEGAGEHVEHVL) shows a compositional bias: basic and acidic residues. Composition is skewed to polar residues over residues 800 to 838 (DSQT…STAS) and 845 to 857 (NETT…QVTL).

Belongs to the SIP5 family.

Its subcellular location is the cytoplasm. Functionally, may negatively regulate the snf-1 kinase. The sequence is that of Protein sip-5 (sip-5) from Neurospora crassa (strain ATCC 24698 / 74-OR23-1A / CBS 708.71 / DSM 1257 / FGSC 987).